The sequence spans 220 residues: UPF0441 protein Spro_4274 (220 aa).

The tract at residues 181–220 (MAPKPAVTNTVTRGGFGESVAKQTSMQRSSATSSSRSMGG) is disordered. Low complexity predominate over residues 203-220 (QTSMQRSSATSSSRSMGG).

Belongs to the UPF0441 family.

In Serratia proteamaculans (strain 568), this protein is UPF0441 protein Spro_4274.